A 2797-amino-acid chain; its full sequence is Nonribosomal peptide synthetase penN (2797 aa).

The tract at residues 239–625 (SRPDHPAICA…ARKDSQVKIR (387 aa)) is adenylation 1. The 74-residue stretch at 751 to 824 (TDTERHVHRF…DIVSLVRTAT (74 aa)) folds into the Carrier 1 domain. Serine 785 bears the O-(pantetheine 4'-phosphoryl)serine mark. The interval 830–856 (PSAGAEISRSDAPTESPATGSFEGSGY) is disordered. The condensation 1 stretch occupies residues 870–1299 (QSFSQARMWF…DIEIGSLLLT (430 aa)). Positions 1328–1731 (FHQQVAAHGD…GRMDQQVKIR (404 aa)) are adenylation 2. Positions 1857 to 1953 (LEIGTGTGMI…VIKQLIQLHD (97 aa)) are methyltransferase. Residues 2277 to 2351 (SFTDDIERAM…RLAGRVRGFR (75 aa)) enclose the Carrier 2 domain. Serine 2311 is modified (O-(pantetheine 4'-phosphoryl)serine). The tract at residues 2516 to 2658 (YDGISLSSIL…VNRTLIRVQL (143 aa)) is condensation 2.

This sequence belongs to the NRP synthetase family.

It carries out the reaction O-methyl-L-tyrosine + anthranilate + S-adenosyl-L-methionine + 2 ATP = (-)-4'-methoxycyclopeptine + 2 AMP + S-adenosyl-L-homocysteine + 2 diphosphate + 2 H(+). It catalyses the reaction anthranilate + L-phenylalanine + S-adenosyl-L-methionine + 2 ATP = cyclopeptine + 2 AMP + S-adenosyl-L-homocysteine + 2 diphosphate + 2 H(+). Its pathway is secondary metabolite biosynthesis. It participates in alkaloid biosynthesis. The protein operates within mycotoxin biosynthesis. Functionally, nonribosomal peptide synthetase; part of the gene cluster that mediates the biosynthesis of penigequinolones, potent insecticidal alkaloids that contain a highly modified 10-carbon prenyl group. The first stage is catalyzed by the nonribosomal peptide synthetase penN that condenses anthranilic acid and O-methyl-L-tyrosine to produce 4'-methoxycyclopeptin. 4'-methoxycyclopeptin is then converted to 4'-methoxydehydrocyclopeptin by the ketoglutarate-dependent dioxygenase penM through dehydrogenation to form a double bond between C-alpha and C-beta of the O-methyltyrosine side chain. PenM also converts its first product methoxydehydrocyclopeptin to 4'-methoxycyclopenin. The following conversion of 4'methoxycyclopenin into 4'-methoxyviridicatin is catalyzed by the cyclopenase penL. 4'-methoxyviridicatin is the precursor of quinolone natural products, and is further converted to quinolinone B. The prenyltransferase penI then catalyzes the canonical Friedel-Crafts alkylation of quinolinone B with dimethylallyl cation to yield dimethylallyl quinolone, which is subjected to FAD-dependent dehydrogenation by the FAD-linked oxidoreductase penH to yield conjugated aryl diene. The delta(3') double bond then serves as the site of the second alkylation with DMAPP catalyzed by the prenyltransferase penG to yield a carbenium ion intermediate, which can be attacked by H(2)O to yield a styrenyl quinolone containing a C3'-hydroxyprenyl chain, or undergo cyclization to yield yaequinolones J1 and J2. The conversion of the styrenyl quinolone into the tetrahydrofuran-containing yaequinolone C is performed by the FAD-dependent monooxygenase penE and involves epoxidation of the terminal C7'-C8' olefin, followed by epoxide ring opening initiated by the C3' hydroxyl group. The predicted cysteine hydrolase penJ acts as an epoxide hydrolase that enhances the rate of the 5-exo-tet cyclization step, increasing the yield of yaequinolone C. PenF catalyzes the cationic rearrangement of the epoxide formed by penE (before ring opening to produce yaequinolone C) into yaequinolone D. Finally, the short-chain dehydrogenase/reductase (SDR)-like reductase penD, catalyzes both the dehydration of yaequinolone D and the reduction of the resulting oxonium to yield penigequinolone. The protein is Nonribosomal peptide synthetase penN of Penicillium thymicola.